The following is a 127-amino-acid chain: Holo-[acyl-carrier-protein] synthase (127 aa).

Mg(2+) is bound by residues Asp9 and Glu58.

It belongs to the P-Pant transferase superfamily. AcpS family. The cofactor is Mg(2+).

It is found in the cytoplasm. It carries out the reaction apo-[ACP] + CoA = holo-[ACP] + adenosine 3',5'-bisphosphate + H(+). Functionally, transfers the 4'-phosphopantetheine moiety from coenzyme A to a Ser of acyl-carrier-protein. The sequence is that of Holo-[acyl-carrier-protein] synthase from Shewanella sp. (strain MR-7).